The primary structure comprises 105 residues: Nucleoid-associated protein ABC0038 (105 aa).

Residues 1 to 22 show a composition bias toward low complexity; it reads MEMKNMGNMMKQMQKMQKQMMK. The interval 1-26 is disordered; sequence MEMKNMGNMMKQMQKMQKQMMKAQEE.

Belongs to the YbaB/EbfC family. Homodimer.

It localises to the cytoplasm. The protein resides in the nucleoid. In terms of biological role, binds to DNA and alters its conformation. May be involved in regulation of gene expression, nucleoid organization and DNA protection. This chain is Nucleoid-associated protein ABC0038, found in Shouchella clausii (strain KSM-K16) (Alkalihalobacillus clausii).